An 88-amino-acid chain; its full sequence is LYR motif-containing protein 2 (88 aa).

The N-terminal 19 residues, 1–19 (MAASRLPPATLTLKQFVRR), are a transit peptide targeting the mitochondrion.

Belongs to the complex I LYR family.

The protein resides in the mitochondrion. Functionally, involved in efficient integration of the N-module into mitochondrial respiratory chain complex I. This Pongo abelii (Sumatran orangutan) protein is LYR motif-containing protein 2 (LYRM2).